The following is a 127-amino-acid chain: Small ribosomal subunit protein uS11 (127 aa).

It belongs to the universal ribosomal protein uS11 family. In terms of assembly, part of the 30S ribosomal subunit. Interacts with proteins S7 and S18. Binds to IF-3.

Functionally, located on the platform of the 30S subunit, it bridges several disparate RNA helices of the 16S rRNA. Forms part of the Shine-Dalgarno cleft in the 70S ribosome. This chain is Small ribosomal subunit protein uS11, found in Rickettsia felis (strain ATCC VR-1525 / URRWXCal2) (Rickettsia azadi).